Consider the following 311-residue polypeptide: MSNSIVIQTNSTVIEDMKQQYKHSLSPKTPQGGIFMAKVPSCTITAYKSGKVMFQGGRAEAEASRWQTVSQTPKTAVKKSVDSHRYAPPASIGTMSIVGSDEVGTGDFFGPMTVVAVYVDAKQIPLLKELGVKDSKNLNDDQITAIAKQLLHVVPYSSLVLHNEKYNELFDKGNNQGKLKALLHNKAITNLLAKMAPTKPEGVLIDQFTQPDTYYKYLAKQKQVQRENVYFATKGESVHLAVAAASILARYSFVKQFDELSKKAGMPLPKGAGKQVDIAAAKLIQKLGKERLPEFVKLHFANTEKALRLLR.

One can recognise an RNase H type-2 domain in the interval 95–311 (MSIVGSDEVG…NTEKALRLLR (217 aa)). A divalent metal cation contacts are provided by Asp101, Glu102, and Asp206.

This sequence belongs to the RNase HII family. RnhC subfamily. Mn(2+) is required as a cofactor. Requires Mg(2+) as cofactor.

It is found in the cytoplasm. It carries out the reaction Endonucleolytic cleavage to 5'-phosphomonoester.. Functionally, endonuclease that specifically degrades the RNA of RNA-DNA hybrids. This chain is Ribonuclease HIII, found in Bacillus cereus (strain ATCC 14579 / DSM 31 / CCUG 7414 / JCM 2152 / NBRC 15305 / NCIMB 9373 / NCTC 2599 / NRRL B-3711).